A 200-amino-acid chain; its full sequence is Recombination protein RecR (200 aa).

The C4-type zinc-finger motif lies at 57-72; that stretch reads CQHCRTFTENSLCDIC. In terms of domain architecture, Toprim spans 81-176; sequence GQLCIVETPA…NITRIAHGVP (96 aa).

This sequence belongs to the RecR family.

May play a role in DNA repair. It seems to be involved in an RecBC-independent recombinational process of DNA repair. It may act with RecF and RecO. The chain is Recombination protein RecR from Tolumonas auensis (strain DSM 9187 / NBRC 110442 / TA 4).